The chain runs to 492 residues: uncharacterized protein (492 aa).

The next 13 membrane-spanning stretches (helical) occupy residues 67 to 87 (VAIM…GGWL), 88 to 108 (ADRV…IMFG), 110 to 130 (IALA…LIIV), 157 to 177 (GFSI…LIVG), 185 to 205 (YHLG…VFAL), 232 to 252 (IGVI…VLTI), 255 to 275 (FIDL…IIMF), 294 to 314 (LFIG…ILAV), 333 to 353 (WFQS…AWLW), 367 to 387 (FSIG…PAMQ), 392 to 412 (LVSP…ELCL), 434 to 454 (SMWF…AGLF), and 464 to 484 (GTIG…SPVI).

It belongs to the major facilitator superfamily. Proton-dependent oligopeptide transporter (POT/PTR) (TC 2.A.17) family.

Its subcellular location is the cell membrane. This is an uncharacterized protein from Bacillus subtilis (strain 168).